The chain runs to 122 residues: uncharacterized protein (122 aa).

The protein localises to the mitochondrion. This is an uncharacterized protein from Claviceps purpurea (Ergot fungus).